A 320-amino-acid chain; its full sequence is GDP-L-fucose synthase (320 aa).

An NADP(+)-binding site is contributed by 14–20; that stretch reads GGSGLVG. Tyr-142 (proton donor/acceptor) is an active-site residue. NADP(+)-binding positions include Lys-146, 169-172, and His-185; that span reads PTNI. Positions 193, 214, and 276 each coordinate substrate.

Belongs to the NAD(P)-dependent epimerase/dehydratase family. Fucose synthase subfamily.

The catalysed reaction is GDP-beta-L-fucose + NADP(+) = GDP-4-dehydro-alpha-D-rhamnose + NADPH + H(+). It functions in the pathway nucleotide-sugar biosynthesis; GDP-L-fucose biosynthesis via de novo pathway; GDP-L-fucose from GDP-alpha-D-mannose: step 2/2. Catalyzes the two-step NADP-dependent conversion of GDP-4-dehydro-6-deoxy-D-mannose to GDP-fucose, involving an epimerase and a reductase reaction. The polypeptide is GDP-L-fucose synthase (ger) (Dictyostelium discoideum (Social amoeba)).